Consider the following 297-residue polypeptide: Lipoyl synthase (297 aa).

The [4Fe-4S] cluster site is built by C34, C39, C45, C60, C64, C67, and S273. The 217-residue stretch at 46–262 folds into the Radical SAM core domain; it reads WNKRHATVMI…KYVAYSKGFL (217 aa).

This sequence belongs to the radical SAM superfamily. Lipoyl synthase family. The cofactor is [4Fe-4S] cluster.

The protein localises to the cytoplasm. The enzyme catalyses [[Fe-S] cluster scaffold protein carrying a second [4Fe-4S](2+) cluster] + N(6)-octanoyl-L-lysyl-[protein] + 2 oxidized [2Fe-2S]-[ferredoxin] + 2 S-adenosyl-L-methionine + 4 H(+) = [[Fe-S] cluster scaffold protein] + N(6)-[(R)-dihydrolipoyl]-L-lysyl-[protein] + 4 Fe(3+) + 2 hydrogen sulfide + 2 5'-deoxyadenosine + 2 L-methionine + 2 reduced [2Fe-2S]-[ferredoxin]. It participates in protein modification; protein lipoylation via endogenous pathway; protein N(6)-(lipoyl)lysine from octanoyl-[acyl-carrier-protein]: step 2/2. Functionally, catalyzes the radical-mediated insertion of two sulfur atoms into the C-6 and C-8 positions of the octanoyl moiety bound to the lipoyl domains of lipoate-dependent enzymes, thereby converting the octanoylated domains into lipoylated derivatives. In Ehrlichia chaffeensis (strain ATCC CRL-10679 / Arkansas), this protein is Lipoyl synthase.